Consider the following 182-residue polypeptide: Transcription termination/antitermination protein NusG (182 aa).

A KOW domain is found at Val131–Val163.

This sequence belongs to the NusG family.

Participates in transcription elongation, termination and antitermination. The chain is Transcription termination/antitermination protein NusG from Staphylococcus epidermidis (strain ATCC 35984 / DSM 28319 / BCRC 17069 / CCUG 31568 / BM 3577 / RP62A).